We begin with the raw amino-acid sequence, 432 residues long: Adenylosuccinate synthetase (432 aa).

GTP contacts are provided by residues 12–18 (GDEGKGK) and 40–42 (GHT). The active-site Proton acceptor is D13. The Mg(2+) site is built by D13 and G40. IMP is bound by residues 13-16 (DEGK), 38-41 (NAGH), T133, R147, Q228, T243, and R307. The active-site Proton donor is H41. 303–309 (TTTGRPR) is a binding site for substrate. GTP is bound by residues R309, 335 to 337 (KLD), and 417 to 419 (GVG).

Belongs to the adenylosuccinate synthetase family. Homodimer. Mg(2+) serves as cofactor.

The protein resides in the cytoplasm. The enzyme catalyses IMP + L-aspartate + GTP = N(6)-(1,2-dicarboxyethyl)-AMP + GDP + phosphate + 2 H(+). The protein operates within purine metabolism; AMP biosynthesis via de novo pathway; AMP from IMP: step 1/2. In terms of biological role, plays an important role in the de novo pathway of purine nucleotide biosynthesis. Catalyzes the first committed step in the biosynthesis of AMP from IMP. This chain is Adenylosuccinate synthetase, found in Nocardioides sp. (strain ATCC BAA-499 / JS614).